Here is a 595-residue protein sequence, read N- to C-terminus: Alpha-1,3-galactosidase B (595 aa).

Positions 1–22 (MKTILLFALSLLLSLSVSDVCA) are cleaved as a signal peptide. PbH1 repeat units follow at residues 432-454 (TPEV…LFST), 455-477 (PKKT…LLCG), and 488-541 (CRDV…VIED).

Belongs to the glycosyl hydrolase 110 family. B subfamily.

The enzyme catalyses Hydrolysis of terminal, non-reducing branched (1-&gt;3)-alpha-D-galactosidic residues, producing free D-galactose.. It catalyses the reaction Hydrolysis of terminal, non-reducing linear (1-&gt;3)-alpha-D-galactosidic residues, producing free D-galactose.. It carries out the reaction Hydrolysis of terminal, non-reducing alpha-D-galactose residues in alpha-D-galactosides, including galactose oligosaccharides, galactomannans and galactolipids.. Functionally, alpha-galactosidase. Removes both branched alpha-1,3-linked galactose residues of blood group B antigens and linear alpha-1,3-linked galactose structures. The chain is Alpha-1,3-galactosidase B (glaB) from Bacteroides fragilis (strain ATCC 25285 / DSM 2151 / CCUG 4856 / JCM 11019 / LMG 10263 / NCTC 9343 / Onslow / VPI 2553 / EN-2).